Here is a 463-residue protein sequence, read N- to C-terminus: Glycine--tRNA ligase (463 aa).

R102 lines the substrate pocket. Positions 113 to 134 (KHGHPPPNGLADIRDPDTGEPG) are disordered. E165 contacts substrate. Residues 197-199 (RNE), 207-212 (FRTREF), 284-285 (EL), and 328-331 (GLTR) each bind ATP. 212 to 216 (FEQME) contacts substrate. 324 to 328 (EPAAG) is a binding site for substrate.

It belongs to the class-II aminoacyl-tRNA synthetase family. As to quaternary structure, homodimer.

Its subcellular location is the cytoplasm. It catalyses the reaction tRNA(Gly) + glycine + ATP = glycyl-tRNA(Gly) + AMP + diphosphate. Functionally, catalyzes the attachment of glycine to tRNA(Gly). This Mycolicibacterium paratuberculosis (strain ATCC BAA-968 / K-10) (Mycobacterium paratuberculosis) protein is Glycine--tRNA ligase.